The chain runs to 207 residues: MIQGTLYIVSAPSGAGKSSLIQALLKTQPLYDTQVSISHTTRAMRPGEAHGQHYFFVPVAEFEHMIAEDAFLEYARVFDNYYGTSREAIQQVLATGVDVFLDIDWQGAQQIRAKMPDARSIFVLPPSKEELDRRLRGRDQDSEEVIGRRMAQAVAEMTHFAEYDYLIVNDDFNTALLDLKTIIRAERLRLGRQKLHHDALISKLLAD.

Positions Gly-4 to Arg-184 constitute a Guanylate kinase-like domain. Ala-11–Ser-18 serves as a coordination point for ATP.

The protein belongs to the guanylate kinase family.

The protein localises to the cytoplasm. The catalysed reaction is GMP + ATP = GDP + ADP. Essential for recycling GMP and indirectly, cGMP. The protein is Guanylate kinase of Sodalis glossinidius (strain morsitans).